We begin with the raw amino-acid sequence, 428 residues long: 3-phosphoshikimate 1-carboxyvinyltransferase (428 aa).

Lysine 23, serine 24, and arginine 28 together coordinate 3-phosphoshikimate. Lysine 23 contributes to the phosphoenolpyruvate binding site. Residues glycine 92 and arginine 120 each contribute to the phosphoenolpyruvate site. 3-phosphoshikimate-binding residues include serine 165, glutamine 167, aspartate 312, and lysine 339. Phosphoenolpyruvate is bound at residue glutamine 167. The active-site Proton acceptor is aspartate 312. Residues arginine 343 and arginine 384 each contribute to the phosphoenolpyruvate site.

The protein belongs to the EPSP synthase family. Monomer.

Its subcellular location is the cytoplasm. It catalyses the reaction 3-phosphoshikimate + phosphoenolpyruvate = 5-O-(1-carboxyvinyl)-3-phosphoshikimate + phosphate. It functions in the pathway metabolic intermediate biosynthesis; chorismate biosynthesis; chorismate from D-erythrose 4-phosphate and phosphoenolpyruvate: step 6/7. Functionally, catalyzes the transfer of the enolpyruvyl moiety of phosphoenolpyruvate (PEP) to the 5-hydroxyl of shikimate-3-phosphate (S3P) to produce enolpyruvyl shikimate-3-phosphate and inorganic phosphate. This chain is 3-phosphoshikimate 1-carboxyvinyltransferase, found in Sulfurimonas denitrificans (strain ATCC 33889 / DSM 1251) (Thiomicrospira denitrificans (strain ATCC 33889 / DSM 1251)).